Consider the following 287-residue polypeptide: ATP synthase gamma chain (287 aa).

It belongs to the ATPase gamma chain family. F-type ATPases have 2 components, CF(1) - the catalytic core - and CF(0) - the membrane proton channel. CF(1) has five subunits: alpha(3), beta(3), gamma(1), delta(1), epsilon(1). CF(0) has three main subunits: a, b and c.

The protein resides in the cell inner membrane. In terms of biological role, produces ATP from ADP in the presence of a proton gradient across the membrane. The gamma chain is believed to be important in regulating ATPase activity and the flow of protons through the CF(0) complex. In Xylella fastidiosa (strain M23), this protein is ATP synthase gamma chain.